A 361-amino-acid chain; its full sequence is UDP-N-acetylglucosamine--N-acetylmuramyl-(pentapeptide) pyrophosphoryl-undecaprenol N-acetylglucosamine transferase (361 aa).

UDP-N-acetyl-alpha-D-glucosamine is bound by residues 13–15, asparagine 125, arginine 167, serine 196, isoleucine 251, 270–275, and glutamine 296; these read TGG and ALTVTE.

Belongs to the glycosyltransferase 28 family. MurG subfamily.

The protein resides in the cell inner membrane. The catalysed reaction is di-trans,octa-cis-undecaprenyl diphospho-N-acetyl-alpha-D-muramoyl-L-alanyl-D-glutamyl-meso-2,6-diaminopimeloyl-D-alanyl-D-alanine + UDP-N-acetyl-alpha-D-glucosamine = di-trans,octa-cis-undecaprenyl diphospho-[N-acetyl-alpha-D-glucosaminyl-(1-&gt;4)]-N-acetyl-alpha-D-muramoyl-L-alanyl-D-glutamyl-meso-2,6-diaminopimeloyl-D-alanyl-D-alanine + UDP + H(+). Its pathway is cell wall biogenesis; peptidoglycan biosynthesis. Cell wall formation. Catalyzes the transfer of a GlcNAc subunit on undecaprenyl-pyrophosphoryl-MurNAc-pentapeptide (lipid intermediate I) to form undecaprenyl-pyrophosphoryl-MurNAc-(pentapeptide)GlcNAc (lipid intermediate II). This Psychrobacter cryohalolentis (strain ATCC BAA-1226 / DSM 17306 / VKM B-2378 / K5) protein is UDP-N-acetylglucosamine--N-acetylmuramyl-(pentapeptide) pyrophosphoryl-undecaprenol N-acetylglucosamine transferase.